A 394-amino-acid polypeptide reads, in one-letter code: Aspergillopepsin-1 (394 aa).

Residues 1-20 (MVVFSKTAALVLGLSSAVSA) form the signal peptide. Positions 21–69 (APAPTRKGFTINQIARPANKTRTINLPGMYARSLAKFGGTVPQSVKEAA) are cleaved as a propeptide — activation peptide. A Peptidase A1 domain is found at 85 to 391 (YLTPVTVGKS…NSEGPKLGFA (307 aa)). Residues Asp-101 and Asp-283 contribute to the active site. Cysteines 319 and 354 form a disulfide.

It belongs to the peptidase A1 family. Monomer.

It localises to the secreted. It carries out the reaction Hydrolysis of proteins with broad specificity. Generally favors hydrophobic residues in P1 and P1', but also accepts Lys in P1, which leads to activation of trypsinogen. Does not clot milk.. Secreted aspartic endopeptidase that allows assimilation of proteinaceous substrates. The scissile peptide bond is attacked by a nucleophilic water molecule activated by two aspartic residues in the active site. Shows a broad primary substrate specificity. Favors hydrophobic residues at the P1 and P1' positions, but also accepts a lysine residue in the P1 position, leading to the activation of trypsinogen and chymotrypsinogen A. The polypeptide is Aspergillopepsin-1 (pepA) (Aspergillus niger (strain ATCC MYA-4892 / CBS 513.88 / FGSC A1513)).